Reading from the N-terminus, the 185-residue chain is Elongation factor P (185 aa).

Belongs to the elongation factor P family.

Its subcellular location is the cytoplasm. The protein operates within protein biosynthesis; polypeptide chain elongation. Involved in peptide bond synthesis. Stimulates efficient translation and peptide-bond synthesis on native or reconstituted 70S ribosomes in vitro. Probably functions indirectly by altering the affinity of the ribosome for aminoacyl-tRNA, thus increasing their reactivity as acceptors for peptidyl transferase. The chain is Elongation factor P from Cyanothece sp. (strain PCC 7425 / ATCC 29141).